The chain runs to 123 residues: Cholecystokinin A (123 aa).

Residues 1 to 20 (MYSGICICLLLAMLSASSKA) form the signal peptide. A propeptide spanning residues 21–103 (HQSEDAVVTE…FDQPHRINDR (83 aa)) is cleaved from the precursor. Tyrosine 105 is modified (sulfotyrosine). Position 111 is a phenylalanine amide (phenylalanine 111). The propeptide occupies 115 to 123 (SAEEYEYSS).

Belongs to the gastrin/cholecystokinin family. In terms of processing, the precursor is cleaved by proteases to produce a number of active cholecystokinins. As to expression, brain, gastrointestinal tract and lung.

The protein resides in the secreted. The sequence is that of Cholecystokinin A (cck-a) from Xenopus laevis (African clawed frog).